A 350-amino-acid polypeptide reads, in one-letter code: D-alanine--D-alanine ligase (350 aa).

In terms of domain architecture, ATP-grasp spans 143-344 (KRILSTFGIS…FKSLINKLIL (202 aa)). 172–227 (INNIKFPCCIKPSNQGSSFGVNVANDFISLKESIDVAFLYSKKILIEPFIQGREIE) is a binding site for ATP. Mg(2+) is bound by residues aspartate 298, glutamate 311, and asparagine 313.

Belongs to the D-alanine--D-alanine ligase family. It depends on Mg(2+) as a cofactor. Requires Mn(2+) as cofactor.

It localises to the cytoplasm. It catalyses the reaction 2 D-alanine + ATP = D-alanyl-D-alanine + ADP + phosphate + H(+). It participates in cell wall biogenesis; peptidoglycan biosynthesis. Cell wall formation. This Wigglesworthia glossinidia brevipalpis protein is D-alanine--D-alanine ligase.